We begin with the raw amino-acid sequence, 315 residues long: tRNA-cytidine(32) 2-sulfurtransferase (315 aa).

The short motif at serine 54–serine 59 is the PP-loop motif element. Cysteine 129, cysteine 132, and cysteine 220 together coordinate [4Fe-4S] cluster.

It belongs to the TtcA family. Homodimer. Mg(2+) serves as cofactor. Requires [4Fe-4S] cluster as cofactor.

The protein localises to the cytoplasm. The catalysed reaction is cytidine(32) in tRNA + S-sulfanyl-L-cysteinyl-[cysteine desulfurase] + AH2 + ATP = 2-thiocytidine(32) in tRNA + L-cysteinyl-[cysteine desulfurase] + A + AMP + diphosphate + H(+). It functions in the pathway tRNA modification. Catalyzes the ATP-dependent 2-thiolation of cytidine in position 32 of tRNA, to form 2-thiocytidine (s(2)C32). The sulfur atoms are provided by the cysteine/cysteine desulfurase (IscS) system. In Bordetella avium (strain 197N), this protein is tRNA-cytidine(32) 2-sulfurtransferase.